Reading from the N-terminus, the 170-residue chain is Microfibrillar-associated protein 5 (170 aa).

The N-terminal stretch at 1-20 (MTFFGPKVLLLLTALIMSSG) is a signal peptide. The Cell attachment site motif lies at 30–32 (RGD). An N-linked (GlcNAc...) asparagine glycan is attached at asparagine 76.

The protein belongs to the MFAP family. Interacts with TGFB2. Interacts with BMP2. Interacts with FBN1 (via N-terminal domain) and FBN2. Post-translationally, forms intermolecular disulfide bonds either with other MAGP-2 molecules or with other components of the microfibrils. As to expression, associated with fibrillin-containing microfibrils of the developing nuchal ligament.

The protein localises to the secreted. It is found in the extracellular space. It localises to the extracellular matrix. Its function is as follows. May play a role in hematopoiesis. In the cardiovascular system, could regulate growth factors or participate in cell signaling in maintaining large vessel integrity. Component of the elastin-associated microfibrils. The chain is Microfibrillar-associated protein 5 (MFAP5) from Bos taurus (Bovine).